Reading from the N-terminus, the 239-residue chain is Bradykinin-potentiating and C-type natriuretic peptides (239 aa).

The signal sequence occupies residues 1–23 (MFVSRLAASGLLLLALLAVSLDG). Propeptides lie at residues 24–33 (KPVQQWSHKG) and 43–49 (LVVQQWS). Glutamine 50 carries the pyrrolidone carboxylic acid modification. The propeptide occupies 62 to 64 (VVV). Residue glutamine 65 is modified to Pyrrolidone carboxylic acid. A propeptide spanning residues 76-82 (LVVQQWS) is cleaved from the precursor. At glutamine 83 the chain carries Pyrrolidone carboxylic acid. Residues 95–97 (LVV) constitute a propeptide that is removed on maturation. Glutamine 98 carries the pyrrolidone carboxylic acid modification. Propeptides lie at residues 109–136 (LLKP…AALD) and 148–217 (GSKA…LAKK). A disordered region spans residues 132–205 (EAALDTPPAG…HHAVGGGGGG (74 aa)). Over residues 161–171 (SKGASATSAAS) the composition is skewed to low complexity. The segment covering 173–183 (PMRDLRTDGKQ) has biased composition (basic and acidic residues). Cysteines 223 and 239 form a disulfide.

It in the N-terminal section; belongs to the bradykinin-potentiating peptide family. This sequence in the central section; belongs to the bradykinin inhibitor peptide family. The protein in the C-terminal section; belongs to the natriuretic peptide family. Expressed by the venom gland.

It is found in the secreted. Its function is as follows. Bradykinin-potentiating peptides both inhibit the activity of the angiotensin-converting enzyme (ACE) and enhances the action of bradykinin by inhibiting the peptidases that inactivate it. They act as indirect hypotensive agent. Inhibits angiotensin-converting enzyme (ACE) activity (IC(50)=4.25 uM), preventing the release of angiotensin and thus indirectly contributing to hypotension. In vivo, induce hypotensive response in both normotensive and hypertensive rats. In terms of biological role, antagonizes the vasodilatory actions of bradykinin at the B2 bradykinin receptor (BDKRB2). Functionally, has a vasorelaxant activity in rat aortic strips and a diuretic potency in anesthetized rats. May act by activating natriuretic receptors (NPR1 and/or NPR2). The protein is Bradykinin-potentiating and C-type natriuretic peptides of Lachesis muta muta (Bushmaster).